The primary structure comprises 281 residues: MNLPANTALFTPSWHAELELGYGRFDDSTRPTLRRHKGPLRVQKHLYAEGPEVCQHIIVHPPGGIAGGDRLDISATVGADAWAQLTSPGAAKWYRAASPAFQQLELHVQPGATLEWLPQESIVFSNAQAELSTRIELHGDAKLCYWDVVALGRPASGERFEHGHFQSHLDIRRDGTLLWHERQRIIGGDGLLDSPIGLDGRTVFATLLMTGEVGSELLEACRSLSMPNPVRGDLTQLPGLLVARCLADEALHARAWLIQIWKCLRPALLGREAVTPRIWNT.

This sequence belongs to the UreD family. UreD, UreF and UreG form a complex that acts as a GTP-hydrolysis-dependent molecular chaperone, activating the urease apoprotein by helping to assemble the nickel containing metallocenter of UreC. The UreE protein probably delivers the nickel.

It localises to the cytoplasm. Functionally, required for maturation of urease via the functional incorporation of the urease nickel metallocenter. This is Urease accessory protein UreD 2 from Pseudomonas syringae pv. syringae (strain B728a).